Reading from the N-terminus, the 490-residue chain is Aspartyl/glutamyl-tRNA(Asn/Gln) amidotransferase subunit B (490 aa).

Belongs to the GatB/GatE family. GatB subfamily. Heterotrimer of A, B and C subunits.

The catalysed reaction is L-glutamyl-tRNA(Gln) + L-glutamine + ATP + H2O = L-glutaminyl-tRNA(Gln) + L-glutamate + ADP + phosphate + H(+). It catalyses the reaction L-aspartyl-tRNA(Asn) + L-glutamine + ATP + H2O = L-asparaginyl-tRNA(Asn) + L-glutamate + ADP + phosphate + 2 H(+). Allows the formation of correctly charged Asn-tRNA(Asn) or Gln-tRNA(Gln) through the transamidation of misacylated Asp-tRNA(Asn) or Glu-tRNA(Gln) in organisms which lack either or both of asparaginyl-tRNA or glutaminyl-tRNA synthetases. The reaction takes place in the presence of glutamine and ATP through an activated phospho-Asp-tRNA(Asn) or phospho-Glu-tRNA(Gln). The polypeptide is Aspartyl/glutamyl-tRNA(Asn/Gln) amidotransferase subunit B (Methylobacterium sp. (strain 4-46)).